Reading from the N-terminus, the 73-residue chain is NAD(P)H-quinone oxidoreductase subunit L (73 aa).

Helical transmembrane passes span 7–27 (LIGL…PFLF) and 44–64 (VLMF…APFM).

The protein belongs to the complex I NdhL subunit family. In terms of assembly, NDH-1 can be composed of about 15 different subunits; different subcomplexes with different compositions have been identified which probably have different functions.

Its subcellular location is the cellular thylakoid membrane. It catalyses the reaction a plastoquinone + NADH + (n+1) H(+)(in) = a plastoquinol + NAD(+) + n H(+)(out). The catalysed reaction is a plastoquinone + NADPH + (n+1) H(+)(in) = a plastoquinol + NADP(+) + n H(+)(out). Its function is as follows. NDH-1 shuttles electrons from an unknown electron donor, via FMN and iron-sulfur (Fe-S) centers, to quinones in the respiratory and/or the photosynthetic chain. The immediate electron acceptor for the enzyme in this species is believed to be plastoquinone. Couples the redox reaction to proton translocation, and thus conserves the redox energy in a proton gradient. Cyanobacterial NDH-1 also plays a role in inorganic carbon-concentration. This is NAD(P)H-quinone oxidoreductase subunit L from Synechococcus sp. (strain JA-3-3Ab) (Cyanobacteria bacterium Yellowstone A-Prime).